A 219-amino-acid chain; its full sequence is uncharacterized protein (219 aa).

The active site involves Asp58.

Belongs to the pseudouridine synthase RluA family.

It carries out the reaction a uridine in RNA = a pseudouridine in RNA. This is an uncharacterized protein from Zymomonas mobilis subsp. mobilis (strain ATCC 31821 / ZM4 / CP4).